The primary structure comprises 415 residues: Plasminogen activator inhibitor 2, macrophage (415 aa).

N-linked (GlcNAc...) asparagine glycosylation is found at Asn-23, Asn-75, Asn-261, and Asn-339.

This sequence belongs to the serpin family. Ov-serpin subfamily. In terms of assembly, interacts with PSMB1. In terms of processing, the signal sequence is not cleaved.

The protein resides in the cytoplasm. It localises to the secreted. It is found in the extracellular space. In terms of biological role, inhibits urokinase-type plasminogen activator. The monocyte derived PAI-2 is distinct from the endothelial cell-derived PAI-1. Not required for normal murine development or survival. The polypeptide is Plasminogen activator inhibitor 2, macrophage (Serpinb2) (Mus musculus (Mouse)).